Here is a 173-residue protein sequence, read N- to C-terminus: Crossover junction endodeoxyribonuclease RuvC (173 aa).

Residues Asp8, Glu67, and Asp139 contribute to the active site. Positions 8, 67, and 139 each coordinate Mg(2+).

It belongs to the RuvC family. As to quaternary structure, homodimer which binds Holliday junction (HJ) DNA. The HJ becomes 2-fold symmetrical on binding to RuvC with unstacked arms; it has a different conformation from HJ DNA in complex with RuvA. In the full resolvosome a probable DNA-RuvA(4)-RuvB(12)-RuvC(2) complex forms which resolves the HJ. Requires Mg(2+) as cofactor.

It localises to the cytoplasm. The catalysed reaction is Endonucleolytic cleavage at a junction such as a reciprocal single-stranded crossover between two homologous DNA duplexes (Holliday junction).. Its function is as follows. The RuvA-RuvB-RuvC complex processes Holliday junction (HJ) DNA during genetic recombination and DNA repair. Endonuclease that resolves HJ intermediates. Cleaves cruciform DNA by making single-stranded nicks across the HJ at symmetrical positions within the homologous arms, yielding a 5'-phosphate and a 3'-hydroxyl group; requires a central core of homology in the junction. The consensus cleavage sequence is 5'-(A/T)TT(C/G)-3'. Cleavage occurs on the 3'-side of the TT dinucleotide at the point of strand exchange. HJ branch migration catalyzed by RuvA-RuvB allows RuvC to scan DNA until it finds its consensus sequence, where it cleaves and resolves the cruciform DNA. This chain is Crossover junction endodeoxyribonuclease RuvC, found in Shewanella oneidensis (strain ATCC 700550 / JCM 31522 / CIP 106686 / LMG 19005 / NCIMB 14063 / MR-1).